The chain runs to 459 residues: Hypotaurine/taurine--pyruvate aminotransferase (459 aa).

K287 is subject to N6-(pyridoxal phosphate)lysine.

The protein belongs to the class-III pyridoxal-phosphate-dependent aminotransferase family. It depends on pyridoxal 5'-phosphate as a cofactor.

The catalysed reaction is hypotaurine + pyruvate = 2-sulfinoacetaldehyde + L-alanine. The enzyme catalyses taurine + pyruvate = sulfoacetaldehyde + L-alanine. Its pathway is organosulfur degradation. Its function is as follows. Converts hypotaurine to alanine and sulfinoacetaldehyde, which desulfinates spontaneously to acetaldehyde and sulfite. Can also catalyze the degradation of taurine into alanine and sulfoacetaldehyde, which is stable. Has 2-fold higher aminotransferase activity with hypotaurine as the substrate. This is Hypotaurine/taurine--pyruvate aminotransferase from Paracoccus denitrificans (strain Pd 1222).